Here is a 443-residue protein sequence, read N- to C-terminus: Tubulin beta chain (443 aa).

Positions 11, 69, 138, 142, 143, 144, 204, and 226 each coordinate GTP. Glu-69 lines the Mg(2+) pocket. A disordered region spans residues 424–443; the sequence is QYQDATAEEEGEFEEEEGEN. A compositionally biased stretch (acidic residues) spans 429–443; the sequence is TAEEEGEFEEEEGEN.

Belongs to the tubulin family. Dimer of alpha and beta chains. A typical microtubule is a hollow water-filled tube with an outer diameter of 25 nm and an inner diameter of 15 nM. Alpha-beta heterodimers associate head-to-tail to form protofilaments running lengthwise along the microtubule wall with the beta-tubulin subunit facing the microtubule plus end conferring a structural polarity. Microtubules usually have 13 protofilaments but different protofilament numbers can be found in some organisms and specialized cells. Mg(2+) is required as a cofactor.

It localises to the cytoplasm. It is found in the cytoskeleton. In terms of biological role, tubulin is the major constituent of microtubules, a cylinder consisting of laterally associated linear protofilaments composed of alpha- and beta-tubulin heterodimers. Microtubules grow by the addition of GTP-tubulin dimers to the microtubule end, where a stabilizing cap forms. Below the cap, tubulin dimers are in GDP-bound state, owing to GTPase activity of alpha-tubulin. The polypeptide is Tubulin beta chain (BETA-TT1) (Tetrahymena pyriformis).